Reading from the N-terminus, the 122-residue chain is MRLCILFAVNAFILEVISTSHNLAIAMICAPMMIHMVGHNLLIPMTLSYALKDYAKVTGTAGSIFGAIYYVVIAAVTYLVSKIHGPTISNFALLCFVLSISSAISFYCIWILYKKKKSNIPN.

This is an uncharacterized protein from Rickettsia conorii (strain ATCC VR-613 / Malish 7).